The sequence spans 624 residues: Kelch-like ECH-associated protein 1 (624 aa).

Position 38 is an S-(2-succinyl)cysteine (C38). Positions 77 to 149 constitute a BTB domain; the sequence is CDVTLQVKYE…AYTASISVGE (73 aa). Residue R135 forms an N5-[4-(S-L-cysteinyl)-5-methyl-1H-imidazol-2-yl]-L-ornithine (Arg-Cys) (interchain with C-151 in KEAP1) linkage. C151 bears the S-(2,3-dicarboxypropyl)cysteine; alternate mark. Residue C151 is modified to S-(2-succinyl)cysteine; alternate. C151 is modified (S-nitrosocysteine; alternate). C151 participates in a covalent cross-link: N5-[4-(S-L-cysteinyl)-5-methyl-1H-imidazol-2-yl]-L-ornithine (Cys-Arg) (interchain with R-135 in KEAP1). Positions 184 to 286 constitute a BACK domain; the sequence is AIGIANFAEQ…TPRFLQTQLQ (103 aa). C241 carries the S-(2-succinyl)cysteine modification. S-(2,3-dicarboxypropyl)cysteine occurs at positions 257 and 273. C288 is modified (S-(2,3-dicarboxypropyl)cysteine; alternate). S-(2-succinyl)cysteine; alternate is present on C288. C319 carries the S-(2-succinyl)cysteine modification. 6 Kelch repeats span residues 327 to 372, 373 to 423, 424 to 470, 471 to 517, 519 to 564, and 565 to 611; these read LIYT…VVGG, LLYA…VIDG, HIYA…VLNR, LLYA…VLHN, IYAA…VHQG, and KIYV…VTME. C434 carries the S-cGMP-cysteine modification. Position 613 is an S-(2-succinyl)cysteine (C613).

This sequence belongs to the KEAP1 family. Component of the BCR(KEAP1) E3 ubiquitin ligase complex, at least composed of 2 molecules of CUL3, 2 molecules of KEAP1, and RBX1. Interacts with NFE2L2/NRF2; the interaction is direct. Forms a ternary complex with NFE2L2/NRF2 and PGAM5. Interacts with (phosphorylated) SQSTM1/p62; the interaction is direct and inactivates the BCR(KEAP1) complex by sequestering it in inclusion bodies, promoting its degradation. Interacts with NFE2L1. Interacts with BPTF and PTMA. Interacts with MAP1LC3B. Interacts indirectly with ENC1. Interacts with SESN1 and SESN2. Interacts with HSP90AA1 and HSP90AB1. Interacts with PGCKA1; this interaction prevents the ubiquitination of KEAP1 by TRIM25, thus protecting KEAP1 from degradation. In terms of processing, non-enzymatic covalent modifications of reactive cysteines by electrophile metabolites inactivate the BCR(KEAP1) complex. Accumulation of fumarate promotes the formation of cysteine S-succination (S-(2-succinyl)cysteine), leading to inactivate the BCR(KEAP1) complex and promote NFE2L2/NRF2 nuclear accumulation and activation. Nitric oxide-dependent 8-Nitro-cGMP formation promotes cysteine guanylation (S-cGMP-cysteine), leading to NFE2L2/NRF2 nuclear accumulation and activation. Itaconate, an anti-inflammatory metabolite generated in response to lipopolysaccharide, alkylates cysteines, activating NFE2L2/NRF2. Methylglyoxal, a reactive metabolite that accumulates when the glycolytic enzyme PGK1 is inhibited, promotes formation of a methylimidazole cross-link between proximal Cys-151 and Arg-135 on another KEAP1 molecule, resulting in an inactive dimer that inactivates the BCR(KEAP1) complex. Degraded via a proteasomal-independent process during selective autophagy: interaction with phosphorylated SQSTM1/p62 sequesters KEAP1 in inclusion bodies, leading to its degradation. Post-translationally, auto-ubiquitinated by the BCR(KEAP1) complex. Quinone-induced oxidative stress, but not sulforaphane, increases its ubiquitination. Ubiquitination and subsequent degradation is most pronounced following prolonged exposure of cells to oxidative stress, particularly in glutathione-deficient cells that are highly susceptible to oxidative stress. Deubiquitinated by USP25; leading to stabilization. Ubiquitinated by TRIM25; leading to degradation upon ER stress.

The protein resides in the cytoplasm. The protein localises to the nucleus. It participates in protein modification; protein ubiquitination. Ubiquitin ligase activity of the BCR(KEAP1) complex is inhibited by oxidative stress and electrophile metabolites such as sulforaphane. Electrophile metabolites react with reactive cysteine residues in KEAP1 and trigger non-enzymatic covalent modifications of these cysteine residues, leading to inactivate the ubiquitin ligase activity of the BCR(KEAP1) complex. Selective autophagy also inactivates the BCR(KEAP1) complex via interaction between KEAP1 and SQSTM1/p62, which sequesters the complex in inclusion bodies and promotes its degradation. In terms of biological role, substrate-specific adapter of a BCR (BTB-CUL3-RBX1) E3 ubiquitin ligase complex that regulates the response to oxidative stress by targeting NFE2L2/NRF2 for ubiquitination. KEAP1 acts as a key sensor of oxidative and electrophilic stress: in normal conditions, the BCR(KEAP1) complex mediates ubiquitination and degradation of NFE2L2/NRF2, a transcription factor regulating expression of many cytoprotective genes. In response to oxidative stress, different electrophile metabolites trigger non-enzymatic covalent modifications of highly reactive cysteine residues in KEAP1, leading to inactivate the ubiquitin ligase activity of the BCR(KEAP1) complex, promoting NFE2L2/NRF2 nuclear accumulation and expression of phase II detoxifying enzymes. In response to selective autophagy, KEAP1 is sequestered in inclusion bodies following its interaction with SQSTM1/p62, leading to inactivation of the BCR(KEAP1) complex and activation of NFE2L2/NRF2. The BCR(KEAP1) complex also mediates ubiquitination of SQSTM1/p62, increasing SQSTM1/p62 sequestering activity and degradation. The BCR(KEAP1) complex also targets BPTF and PGAM5 for ubiquitination and degradation by the proteasome. The polypeptide is Kelch-like ECH-associated protein 1 (Mus musculus (Mouse)).